A 551-amino-acid polypeptide reads, in one-letter code: Dihydroxy-acid dehydratase (551 aa).

Position 78 (D78) interacts with Mg(2+). C119 is a [2Fe-2S] cluster binding site. Mg(2+)-binding residues include D120 and K121. K121 is subject to N6-carboxylysine. C191 is a [2Fe-2S] cluster binding site. Residue E442 coordinates Mg(2+). S468 acts as the Proton acceptor in catalysis.

This sequence belongs to the IlvD/Edd family. In terms of assembly, homodimer. [2Fe-2S] cluster serves as cofactor. Requires Mg(2+) as cofactor.

The catalysed reaction is (2R)-2,3-dihydroxy-3-methylbutanoate = 3-methyl-2-oxobutanoate + H2O. It carries out the reaction (2R,3R)-2,3-dihydroxy-3-methylpentanoate = (S)-3-methyl-2-oxopentanoate + H2O. The protein operates within amino-acid biosynthesis; L-isoleucine biosynthesis; L-isoleucine from 2-oxobutanoate: step 3/4. Its pathway is amino-acid biosynthesis; L-valine biosynthesis; L-valine from pyruvate: step 3/4. Functions in the biosynthesis of branched-chain amino acids. Catalyzes the dehydration of (2R,3R)-2,3-dihydroxy-3-methylpentanoate (2,3-dihydroxy-3-methylvalerate) into 2-oxo-3-methylpentanoate (2-oxo-3-methylvalerate) and of (2R)-2,3-dihydroxy-3-methylbutanoate (2,3-dihydroxyisovalerate) into 2-oxo-3-methylbutanoate (2-oxoisovalerate), the penultimate precursor to L-isoleucine and L-valine, respectively. In Halothermothrix orenii (strain H 168 / OCM 544 / DSM 9562), this protein is Dihydroxy-acid dehydratase.